A 328-amino-acid polypeptide reads, in one-letter code: Hairy/enhancer-of-split related with YRPW motif-like protein (328 aa).

The segment at Met1–Arg54 is disordered. Residues Gln42–Ala111 form a transcriptional repression and interaction with NCOR1 and SIN3A region. Residues Ala43–Leu98 form the bHLH domain. The Orange domain occupies Phe116–Leu153. Residues Leu236–Met272 are disordered.

Belongs to the HEY family. As to quaternary structure, self-associates. Interacts with GATA4, GATA6, HES1, HEY1 and HEY2. Interacts with HDAC1, NCOR1 and SIN3A.

It localises to the nucleus. Functionally, downstream effector of Notch signaling which may be required for cardiovascular development. Transcriptional repressor which binds preferentially to the canonical E box sequence 5'-CACGTG-3'. Represses transcription by the cardiac transcriptional activators GATA4 and GATA6. The chain is Hairy/enhancer-of-split related with YRPW motif-like protein (HEYL) from Bos taurus (Bovine).